A 187-amino-acid polypeptide reads, in one-letter code: UPF0200 protein MA_4660 (187 aa).

9–16 (GMPASGKS) contributes to the ATP binding site.

The protein belongs to the UPF0200 family.

In Methanosarcina acetivorans (strain ATCC 35395 / DSM 2834 / JCM 12185 / C2A), this protein is UPF0200 protein MA_4660.